A 110-amino-acid chain; its full sequence is UPF0473 protein SSP1146 (110 aa).

This sequence belongs to the UPF0473 family.

In Staphylococcus saprophyticus subsp. saprophyticus (strain ATCC 15305 / DSM 20229 / NCIMB 8711 / NCTC 7292 / S-41), this protein is UPF0473 protein SSP1146.